We begin with the raw amino-acid sequence, 360 residues long: Homeobox protein ceh-60 (360 aa).

The PBC-A stretch occupies residues 1–82 (MDNLIKQLQM…ENPTFPLEEV (82 aa)). Residues 1–179 (MDNLIKQLQM…ILVLRREIEQ (179 aa)) form the PBC domain. The interval 85-179 (EKDEEWQPLE…ILVLRREIEQ (95 aa)) is PBC-B. Residues 180–242 (QGRKRRNFDK…NQRIRTKQQA (63 aa)) constitute a DNA-binding region (homeobox).

This sequence belongs to the TALE/PBX homeobox family. In terms of assembly, forms a heterodimer with homeobox unc-62. Interacts with pqm-1.

Its subcellular location is the nucleus. Functionally, probable transcription regulator which binds to DNA, repressing genes involved in longevity and stress, while activating genes involved in reproduction, such as the vitellogenins. Associates with homeobox unc-62 to regulate gene expression, including repression of genes involved in innate immunity. Required for intestinal expression of vitellogenin genes. Negatively modulates longevity, probably independently of effects on vitellogenesis. Involved in lipid homeostasis, contributing to the reallocation of intestinal lipids to the germline and to the formation of the cuticle. Associates with transcriptional regulator pqm-1 at the daf-16 associated element within the promoters of stress-responsive genes to regulate expression. The sequence is that of Homeobox protein ceh-60 from Caenorhabditis elegans.